The chain runs to 741 residues: Phosphoribosylformylglycinamidine synthase subunit PurL (741 aa).

His53 is an active-site residue. ATP is bound by residues Tyr56 and Lys95. Position 97 (Glu97) interacts with Mg(2+). Substrate is bound by residues 98-101 (SHNH) and Arg120. His99 acts as the Proton acceptor in catalysis. Residue Asp121 participates in Mg(2+) binding. Gln244 serves as a coordination point for substrate. Asp274 is a Mg(2+) binding site. 318-320 (ESQ) is a binding site for substrate. ATP is bound by residues Asp501 and Gly538. Asn539 serves as a coordination point for Mg(2+). Substrate is bound at residue Ser541.

The protein belongs to the FGAMS family. As to quaternary structure, monomer. Part of the FGAM synthase complex composed of 1 PurL, 1 PurQ and 2 PurS subunits.

Its subcellular location is the cytoplasm. The enzyme catalyses N(2)-formyl-N(1)-(5-phospho-beta-D-ribosyl)glycinamide + L-glutamine + ATP + H2O = 2-formamido-N(1)-(5-O-phospho-beta-D-ribosyl)acetamidine + L-glutamate + ADP + phosphate + H(+). It functions in the pathway purine metabolism; IMP biosynthesis via de novo pathway; 5-amino-1-(5-phospho-D-ribosyl)imidazole from N(2)-formyl-N(1)-(5-phospho-D-ribosyl)glycinamide: step 1/2. In terms of biological role, part of the phosphoribosylformylglycinamidine synthase complex involved in the purines biosynthetic pathway. Catalyzes the ATP-dependent conversion of formylglycinamide ribonucleotide (FGAR) and glutamine to yield formylglycinamidine ribonucleotide (FGAM) and glutamate. The FGAM synthase complex is composed of three subunits. PurQ produces an ammonia molecule by converting glutamine to glutamate. PurL transfers the ammonia molecule to FGAR to form FGAM in an ATP-dependent manner. PurS interacts with PurQ and PurL and is thought to assist in the transfer of the ammonia molecule from PurQ to PurL. The protein is Phosphoribosylformylglycinamidine synthase subunit PurL of Limosilactobacillus fermentum (strain NBRC 3956 / LMG 18251) (Lactobacillus fermentum).